The following is a 281-amino-acid chain: MLNIGCHLSSSKGYKAMGKDAISINANTFQFFTRNPRGSKAKAMDLKDVEGLLQLMEENKFAKILAHAPYTLNPCSADERTREFAMEVLVDDLARMEYLPNNFYNFHPGNHLKQGVEVGIEYIVNSLNDVLKPDQTTTVLLETMSGKGTEIGKNFEELKQIIDGIKLSNKVGVCLDTCHVYDAGYDIVQDLDGVIQEFDRIIGLDKLYAIHLNDSKNPFASHKDRHAKIGEGYIGEEGIVRIINHPKLRHLPFFLETPNDLEGHGEEIKMLREAYRDESIL.

Residues H67, H107, E142, D176, H179, H211, D224, H226, and E256 each contribute to the Zn(2+) site.

This sequence belongs to the AP endonuclease 2 family. Requires Zn(2+) as cofactor.

It carries out the reaction Endonucleolytic cleavage to 5'-phosphooligonucleotide end-products.. In terms of biological role, endonuclease IV plays a role in DNA repair. It cleaves phosphodiester bonds at apurinic or apyrimidinic (AP) sites, generating a 3'-hydroxyl group and a 5'-terminal sugar phosphate. The protein is Probable endonuclease 4 of Alkaliphilus oremlandii (strain OhILAs) (Clostridium oremlandii (strain OhILAs)).